The following is a 298-amino-acid chain: Pantothenate synthetase (298 aa).

Residue 30–37 coordinates ATP; that stretch reads MGNLHEGH. His37 acts as the Proton donor in catalysis. Gln61 provides a ligand contact to (R)-pantoate. Gln61 contributes to the beta-alanine binding site. An ATP-binding site is contributed by 149 to 152; sequence GEKD. Position 155 (Gln155) interacts with (R)-pantoate. Residues Val178 and 186 to 189 contribute to the ATP site; that span reads MSSR.

This sequence belongs to the pantothenate synthetase family. In terms of assembly, homodimer.

It is found in the cytoplasm. It catalyses the reaction (R)-pantoate + beta-alanine + ATP = (R)-pantothenate + AMP + diphosphate + H(+). It participates in cofactor biosynthesis; (R)-pantothenate biosynthesis; (R)-pantothenate from (R)-pantoate and beta-alanine: step 1/1. Catalyzes the condensation of pantoate with beta-alanine in an ATP-dependent reaction via a pantoyl-adenylate intermediate. In Aliivibrio salmonicida (strain LFI1238) (Vibrio salmonicida (strain LFI1238)), this protein is Pantothenate synthetase.